The following is a 255-amino-acid chain: Homeobox protein DLX-1 (255 aa).

The segment covering 1–14 has biased composition (polar residues); the sequence is MTMTTMPESLNSPV. Disordered regions lie at residues 1–38 and 95–118; these read MTMTTMPESLNSPVSGKAVFMEFGPPNQQMSPSPMSHG and SLAQSRLEDPGADSEKSTVVEGGE. The span at 25-36 shows a compositional bias: low complexity; sequence PPNQQMSPSPMS. Residues 100-112 show a composition bias toward basic and acidic residues; that stretch reads RLEDPGADSEKST. Residues 128 to 187 constitute a DNA-binding region (homeobox); the sequence is IRKPRTIYSSLQLQALNRRFQQTQYLALPERAELAASLGLTQTQVKIWFQNKRSKFKKLM. The tract at residues 204 to 230 is disordered; that stretch reads ALSAGSPPVPPGWNPNSSSGKGSGGNA.

This sequence belongs to the distal-less homeobox family. As to quaternary structure, interacts with SMAD4 (via homeobox DNA-binding domain). Interacts (via homeobox DNA-binding domain) with POU4F2; this interaction suppresses DLX1-mediated transcriptional activity in postnatal retina and enhances retinal ganglion cell (RGC) differentiation. Expressed in hematopoietic cell lines.

It is found in the nucleus. Its function is as follows. Plays a role as a transcriptional activator or repressor. Inhibits several cytokine signaling pathways, such as TGFB1, activin-A/INHBA and BMP4 by interfering with the transcriptional stimulatory activity of transcription factors, such as MSX2, FAST2, SMAD2 and SMAD3 during hematopoietic cell differentiation. Plays a role in terminal differentiation of interneurons, such as amacrine and bipolar cells in the developing retina. Likely to play a regulatory role in the development of the ventral forebrain. May play a role in craniofacial patterning and morphogenesis and may be involved in the early development of diencephalic subdivisions. The chain is Homeobox protein DLX-1 (DLX1) from Homo sapiens (Human).